A 224-amino-acid chain; its full sequence is uncharacterized protein (224 aa).

The signal sequence occupies residues 1-16 (MKILYSFLLLPFFSCA).

This is an uncharacterized protein from Escherichia coli.